The primary structure comprises 260 residues: Type III pantothenate kinase (260 aa).

6–13 (DCGNTNTV) is a binding site for ATP. 107 to 110 (GPDR) contributes to the substrate binding site. The Proton acceptor role is filled by Asp-109. Asp-129 provides a ligand contact to K(+). An ATP-binding site is contributed by Thr-132. Residue Thr-184 coordinates substrate.

Belongs to the type III pantothenate kinase family. In terms of assembly, homodimer. The cofactor is NH4(+). It depends on K(+) as a cofactor.

It localises to the cytoplasm. The catalysed reaction is (R)-pantothenate + ATP = (R)-4'-phosphopantothenate + ADP + H(+). Its pathway is cofactor biosynthesis; coenzyme A biosynthesis; CoA from (R)-pantothenate: step 1/5. Functionally, catalyzes the phosphorylation of pantothenate (Pan), the first step in CoA biosynthesis. The polypeptide is Type III pantothenate kinase (Ruegeria sp. (strain TM1040) (Silicibacter sp.)).